The sequence spans 198 residues: Thymidine kinase (198 aa).

ATP is bound by residues 9–16 (GTMNSGKS) and 85–88 (DEAQ). Glu-86 functions as the Proton acceptor in the catalytic mechanism. Positions 143, 146, 180, and 183 each coordinate Zn(2+).

This sequence belongs to the thymidine kinase family. In terms of assembly, homotetramer.

It localises to the cytoplasm. It catalyses the reaction thymidine + ATP = dTMP + ADP + H(+). This is Thymidine kinase from Streptococcus thermophilus (strain ATCC BAA-250 / LMG 18311).